The following is an 811-amino-acid chain: DNA mismatch repair protein MutS (811 aa).

595–602 (GPNMSGKS) serves as a coordination point for ATP.

The protein belongs to the DNA mismatch repair MutS family.

Functionally, this protein is involved in the repair of mismatches in DNA. It is possible that it carries out the mismatch recognition step. This protein has a weak ATPase activity. This is DNA mismatch repair protein MutS from Pseudothermotoga lettingae (strain ATCC BAA-301 / DSM 14385 / NBRC 107922 / TMO) (Thermotoga lettingae).